Consider the following 272-residue polypeptide: Rhamnulose-1-phosphate aldolase (272 aa).

Residue E117 is part of the active site. Residues H141, H143, and H212 each coordinate Zn(2+).

The protein belongs to the aldolase class II family. RhaD subfamily. The cofactor is Zn(2+).

The protein resides in the cytoplasm. It carries out the reaction L-rhamnulose 1-phosphate = (S)-lactaldehyde + dihydroxyacetone phosphate. The protein operates within carbohydrate degradation; L-rhamnose degradation; glycerone phosphate from L-rhamnose: step 3/3. Its function is as follows. Catalyzes the reversible cleavage of L-rhamnulose-1-phosphate to dihydroxyacetone phosphate (DHAP) and L-lactaldehyde. This Mannheimia succiniciproducens (strain KCTC 0769BP / MBEL55E) protein is Rhamnulose-1-phosphate aldolase.